A 141-amino-acid chain; its full sequence is Large ribosomal subunit protein uL16 (141 aa).

A disordered region spans residues 1 to 20 (MLMPKRTKYRKQMKGRNRGK).

The protein belongs to the universal ribosomal protein uL16 family. As to quaternary structure, part of the 50S ribosomal subunit.

Its function is as follows. Binds 23S rRNA and is also seen to make contacts with the A and possibly P site tRNAs. The sequence is that of Large ribosomal subunit protein uL16 from Helicobacter hepaticus (strain ATCC 51449 / 3B1).